The chain runs to 759 residues: 5-methyltetrahydropteroyltriglutamate--homocysteine methyltransferase (759 aa).

5-methyltetrahydropteroyltri-L-glutamate contacts are provided by residues 17–20 (RELK) and K116. Residues 430–432 (IGS) and E483 contribute to the L-homocysteine site. L-methionine-binding positions include 430-432 (IGS) and E483. 5-methyltetrahydropteroyltri-L-glutamate is bound by residues 514-515 (RC) and W560. D598 contacts L-homocysteine. L-methionine is bound at residue D598. E604 provides a ligand contact to 5-methyltetrahydropteroyltri-L-glutamate. H641, C643, and E665 together coordinate Zn(2+). Catalysis depends on H694, which acts as the Proton donor. C726 contributes to the Zn(2+) binding site.

This sequence belongs to the vitamin-B12 independent methionine synthase family. The cofactor is Zn(2+).

It catalyses the reaction 5-methyltetrahydropteroyltri-L-glutamate + L-homocysteine = tetrahydropteroyltri-L-glutamate + L-methionine. It functions in the pathway amino-acid biosynthesis; L-methionine biosynthesis via de novo pathway; L-methionine from L-homocysteine (MetE route): step 1/1. Functionally, catalyzes the transfer of a methyl group from 5-methyltetrahydrofolate to homocysteine resulting in methionine formation. This is 5-methyltetrahydropteroyltriglutamate--homocysteine methyltransferase from Lactococcus lactis subsp. lactis (strain IL1403) (Streptococcus lactis).